Reading from the N-terminus, the 572-residue chain is E3 ubiquitin-protein ligase ZFP91 (572 aa).

The segment covering 1–12 (MPGETEEPRSPE) has biased composition (basic and acidic residues). Positions 1-308 (MPGETEEPRS…PRLPKRRKKP (308 aa)) are disordered. The segment covering 61-70 (AAAAAAAAAA) has biased composition (low complexity). The span at 72 to 85 (SRRRKAEYPRRRRS) shows a compositional bias: basic residues. Phosphoserine occurs at positions 86 and 106. Residues 122–131 (LTTDKDPKEE) show a composition bias toward basic and acidic residues. Low complexity predominate over residues 143–162 (SITTTRASRSWRSSSRTSIS). Positions 209–225 (SDEEEEEEEEMLISEEE) are enriched in acidic residues. Basic and acidic residues-rich tracts occupy residues 226–247 (IPFK…ETPK) and 254–271 (KVKE…VEVE). Residues 272 to 284 (VKEEENEIREDEE) are compositionally biased toward acidic residues. C2H2-type zinc fingers lie at residues 313-338 (VRCE…KYQH), 344-368 (YVCP…AKHH), 374-396 (YICE…RMIH), 402-424 (LQCE…MKKH), and 432-455 (FSCN…AKSH). An interaction with MAP3K14/NIK region spans residues 340 to 370 (LKKKYVCPHPSCGRLFRLQKQLLRHAKHHTD).

It belongs to the krueppel C2H2-type zinc-finger protein family. Interacts with MAP3K14/NIK. In terms of tissue distribution, found in all the examined tissues including brain, heart, kidney, lung, liver, spleen, thymus, skeletal muscle, ovary and testis.

Its subcellular location is the nucleus. The enzyme catalyses S-ubiquitinyl-[E2 ubiquitin-conjugating enzyme]-L-cysteine + [acceptor protein]-L-lysine = [E2 ubiquitin-conjugating enzyme]-L-cysteine + N(6)-ubiquitinyl-[acceptor protein]-L-lysine.. It functions in the pathway protein modification; protein ubiquitination. Functionally, atypical E3 ubiquitin-protein ligase that mediates 'Lys-63'-linked ubiquitination of MAP3K14/NIK, leading to stabilize and activate MAP3K14/NIK. It thereby acts as an activator of the non-canonical NF-kappa-B2/NFKB2 pathway. May also play an important role in cell proliferation and/or anti-apoptosis. The polypeptide is E3 ubiquitin-protein ligase ZFP91 (Zfp91) (Mus musculus (Mouse)).